A 331-amino-acid chain; its full sequence is 4-hydroxythreonine-4-phosphate dehydrogenase (331 aa).

Residues histidine 137 and threonine 138 each contribute to the substrate site. A divalent metal cation contacts are provided by histidine 167, histidine 212, and histidine 267. The substrate site is built by lysine 275, asparagine 284, and arginine 293.

The protein belongs to the PdxA family. In terms of assembly, homodimer. Zn(2+) serves as cofactor. Mg(2+) is required as a cofactor. Requires Co(2+) as cofactor.

The protein resides in the cytoplasm. The enzyme catalyses 4-(phosphooxy)-L-threonine + NAD(+) = 3-amino-2-oxopropyl phosphate + CO2 + NADH. Its pathway is cofactor biosynthesis; pyridoxine 5'-phosphate biosynthesis; pyridoxine 5'-phosphate from D-erythrose 4-phosphate: step 4/5. Catalyzes the NAD(P)-dependent oxidation of 4-(phosphooxy)-L-threonine (HTP) into 2-amino-3-oxo-4-(phosphooxy)butyric acid which spontaneously decarboxylates to form 3-amino-2-oxopropyl phosphate (AHAP). This Yersinia enterocolitica serotype O:8 / biotype 1B (strain NCTC 13174 / 8081) protein is 4-hydroxythreonine-4-phosphate dehydrogenase.